Reading from the N-terminus, the 618-residue chain is Grainyhead-like protein 1 homolog (618 aa).

Positions 1 to 91 are transcription activation; sequence MTQEYDNKRP…EGEHPEPEHS (91 aa). The segment covering 76–92 has biased composition (basic and acidic residues); it reads SSAVKPEGEHPEPEHSK. The disordered stretch occupies residues 76-100; sequence SSAVKPEGEHPEPEHSKRNSIPNVT. Position 208 is a phosphothreonine (Thr208). In terms of domain architecture, Grh/CP2 DB spans 248 to 474; it reads SGNNFEYTLE…DLDTQPVLFI (227 aa). Interaction with DNA regions lie at residues 380–389 and 427–430; these read TDFSSQKGVK and RKIR.

This sequence belongs to the grh/CP2 family. Grainyhead subfamily. As to quaternary structure, binds DNA as homodimer. Homodimer, also forms heterodimers with GRHL2 or GRHL3. In terms of processing, methylation at Arg-9 and Lys-116 may be involved in regulating transcriptional activation. In terms of tissue distribution, isoform 1 is highly expressed in brain, pancreas, tonsil, placenta and kidney. Isoform 2 is highly expressed in brain and liver. Expression in the skin is confined to the suprabasal layers of the epidermis and to the hair follicles.

Its subcellular location is the nucleus. In terms of biological role, transcription factor involved in epithelial development. Binds directly to the consensus DNA sequence 5'-AACCGGTT-3'. Important regulator of DSG1 in the context of hair anchorage and epidermal differentiation, participates in the maintenance of the skin barrier. There is no genetic interaction with GRHL3, nor functional cooperativity due to diverse target gene selectivity during epithelia development. May play a role in regulating glucose homeostasis and insulin signaling. The protein is Grainyhead-like protein 1 homolog of Mus musculus (Mouse).